Consider the following 539-residue polypeptide: MANIDLSQYGITGTTGILHNPSYKTLFEEETKEGLTGYEQGQVSELGAVNVKTGIFTGRSPKDKFIVDDETSHDTVWWDSEDYHNDNHRATPETWNALKEIAKKELSNKKLYVVDAFCGANKDTRMAVRFIVEVAWQAHFVTNMFIQPTEEELANFKPDFVVYNASKAKVENYKELGLHSETAVVFNLTSREQVIINTWYGGEMKKGMFSMMNYFLPLKGIAAMHCSANTDKQGQNTAIFFGLSGTGKTTLSTDPKRLLIGDDEHGWDDEGVFNFEGGCYAKVINLDMESEPDIYGAIKRNALLENVTLDDKGNIDFADKTITENTRVSYPIDHIKGTVKGFVNDKSAAPAAKSVIFLSADAFGVLPPVSILTPEQTKYYFLSGFTAKLAGTERGITEPTPTFSACFGQAFLELHPTKYAEELVKKMEANGTKAYLVNTGWNGSGKRISIKDTRGIIDAIHSGAIKKAPTKKIPFFNLEVPTELEGVDTNILDPKDTYANPADWEAKAKDLAQRFIKNFDKYTKNNEAGKALVAAGPQL.

Residues arginine 59, tyrosine 200, and lysine 206 each contribute to the substrate site. ATP-binding positions include lysine 206, histidine 225, and 242 to 250 (GLSGTGKTT). 2 residues coordinate Mn(2+): lysine 206 and histidine 225. Aspartate 263 is a Mn(2+) binding site. ATP-binding positions include glutamate 291, arginine 327, 447-448 (RI), and threonine 453. A substrate-binding site is contributed by arginine 327.

The protein belongs to the phosphoenolpyruvate carboxykinase (ATP) family. The cofactor is Mn(2+).

The protein resides in the cytoplasm. The catalysed reaction is oxaloacetate + ATP = phosphoenolpyruvate + ADP + CO2. It participates in carbohydrate biosynthesis; gluconeogenesis. Involved in the gluconeogenesis. Catalyzes the conversion of oxaloacetate (OAA) to phosphoenolpyruvate (PEP) through direct phosphoryl transfer between the nucleoside triphosphate and OAA. The chain is Phosphoenolpyruvate carboxykinase (ATP) from Selenomonas ruminantium.